The chain runs to 233 residues: Uracil-DNA glycosylase (233 aa).

Aspartate 70 acts as the Proton acceptor in catalysis.

The protein belongs to the uracil-DNA glycosylase (UDG) superfamily. UNG family.

It is found in the cytoplasm. It carries out the reaction Hydrolyzes single-stranded DNA or mismatched double-stranded DNA and polynucleotides, releasing free uracil.. In terms of biological role, excises uracil residues from the DNA which can arise as a result of misincorporation of dUMP residues by DNA polymerase or due to deamination of cytosine. The chain is Uracil-DNA glycosylase from Helicobacter acinonychis (strain Sheeba).